We begin with the raw amino-acid sequence, 423 residues long: Lipoyl synthase 1, mitochondrial (423 aa).

Positions 127, 132, 138, 159, 163, 166, and 375 each coordinate [4Fe-4S] cluster. Positions 142 to 364 (DEEEGTATAT…EEEAMAMGFL (223 aa)) constitute a Radical SAM core domain.

It belongs to the radical SAM superfamily. Lipoyl synthase family. Requires [4Fe-4S] cluster as cofactor.

The protein localises to the mitochondrion. It carries out the reaction [[Fe-S] cluster scaffold protein carrying a second [4Fe-4S](2+) cluster] + N(6)-octanoyl-L-lysyl-[protein] + 2 oxidized [2Fe-2S]-[ferredoxin] + 2 S-adenosyl-L-methionine + 4 H(+) = [[Fe-S] cluster scaffold protein] + N(6)-[(R)-dihydrolipoyl]-L-lysyl-[protein] + 4 Fe(3+) + 2 hydrogen sulfide + 2 5'-deoxyadenosine + 2 L-methionine + 2 reduced [2Fe-2S]-[ferredoxin]. Its pathway is protein modification; protein lipoylation via endogenous pathway; protein N(6)-(lipoyl)lysine from octanoyl-[acyl-carrier-protein]: step 2/2. Functionally, catalyzes the radical-mediated insertion of two sulfur atoms into the C-6 and C-8 positions of the octanoyl moiety bound to the lipoyl domains of lipoate-dependent enzymes, thereby converting the octanoylated domains into lipoylated derivatives. This is Lipoyl synthase 1, mitochondrial from Trypanosoma cruzi (strain CL Brener).